Reading from the N-terminus, the 773-residue chain is C-Maf-inducing protein (773 aa).

The segment at 1–30 (MDVTSSSGGGGDPRQIEETKPLLGGDVSAP) is disordered. The PH domain maps to 54 to 163 (LLQEGDIQVC…HSLQWKKKIY (110 aa)). Phosphoserine occurs at positions 349, 377, 382, and 660. LRR repeat units follow at residues 663–686 (NLEN…IKLP), 687–707 (SLKQ…RLLS), 712–732 (MLQV…LALS), and 736–756 (SLCS…EDLK).

In terms of assembly, interacts with FLNA. As to expression, isoform 1 is expressed in peripheral blood mononuclear cells and kidney. Lower expression in brain and liver. Expression is down-regulated in activated cells. Isoform 2 is expressed in lymphocyte precursors, however, expression shuts down during maturation and differentiation in thymus and fetal liver.

The protein localises to the nucleus. The protein resides in the cytoplasm. Functionally, plays a role in T-cell signaling pathway. Isoform 2 may play a role in T-helper 2 (Th2) signaling pathway and seems to represent the first proximal signaling protein that links T-cell receptor-mediated signal to the activation of c-Maf Th2 specific factor. The chain is C-Maf-inducing protein (CMIP) from Homo sapiens (Human).